The sequence spans 93 residues: CRISPR-associated endoribonuclease Cas2 1 (93 aa).

Asp-8 serves as a coordination point for Mg(2+).

Belongs to the CRISPR-associated endoribonuclease Cas2 protein family. As to quaternary structure, homodimer, forms a heterotetramer with a Cas1 homodimer. Mg(2+) serves as cofactor.

Functionally, CRISPR (clustered regularly interspaced short palindromic repeat), is an adaptive immune system that provides protection against mobile genetic elements (viruses, transposable elements and conjugative plasmids). CRISPR clusters contain sequences complementary to antecedent mobile elements and target invading nucleic acids. CRISPR clusters are transcribed and processed into CRISPR RNA (crRNA). Functions as a ssRNA-specific endoribonuclease. Involved in the integration of spacer DNA into the CRISPR cassette. In Chloroflexus aurantiacus (strain ATCC 29366 / DSM 635 / J-10-fl), this protein is CRISPR-associated endoribonuclease Cas2 1.